A 228-amino-acid polypeptide reads, in one-letter code: PKHD-type hydroxylase XAC2942 (228 aa).

Residues 78–180 (RIYPPLFNRY…RVACFFWAQS (103 aa)) enclose the Fe2OG dioxygenase domain. His96, Asp98, and His161 together coordinate Fe cation. Arg171 lines the 2-oxoglutarate pocket.

It depends on Fe(2+) as a cofactor. L-ascorbate is required as a cofactor.

The polypeptide is PKHD-type hydroxylase XAC2942 (Xanthomonas axonopodis pv. citri (strain 306)).